Here is a 380-residue protein sequence, read N- to C-terminus: Chorismate synthase (380 aa).

The NADP(+) site is built by R48 and R53. Residues R126–S128, G284, K299–S303, and R326 contribute to the FMN site.

The protein belongs to the chorismate synthase family. It depends on FMNH2 as a cofactor.

The enzyme catalyses 5-O-(1-carboxyvinyl)-3-phosphoshikimate = chorismate + phosphate. It functions in the pathway metabolic intermediate biosynthesis; chorismate biosynthesis; chorismate from D-erythrose 4-phosphate and phosphoenolpyruvate: step 7/7. Functionally, catalyzes the anti-1,4-elimination of the C-3 phosphate and the C-6 proR hydrogen from 5-enolpyruvylshikimate-3-phosphate (EPSP) to yield chorismate, which is the branch point compound that serves as the starting substrate for the three terminal pathways of aromatic amino acid biosynthesis. This reaction introduces a second double bond into the aromatic ring system. This chain is Chorismate synthase, found in Ignicoccus hospitalis (strain KIN4/I / DSM 18386 / JCM 14125).